A 170-amino-acid chain; its full sequence is Zinc finger matrin-type protein 5 (170 aa).

The C3H1-type zinc finger occupies E51 to E79. Positions P150–G170 are disordered.

As to quaternary structure, component of the U11/U12 snRNPs that are part of the U12-type spliceosome. Not found in the major spliceosome.

It localises to the nucleus. This Homo sapiens (Human) protein is Zinc finger matrin-type protein 5 (ZMAT5).